Consider the following 421-residue polypeptide: E3 ubiquitin-protein ligase RMD5 (421 aa).

Residues 176–236 (EFIEMGQIVH…QIVKHGNPVE (61 aa)) form the CTLH domain. The RING-Gid-type zinc finger occupies 361 to 404 (CPVLKEETTTENPPYSLACHHIISKKALDRLSKNGTITFKCPYC).

It belongs to the RMD5/GID2 family. In terms of assembly, identified in the GID/CTLH complex. In the absence of stress, the complex exists as an inactive anticipatory complex (GID(Ant)), composed of VID30/GID1, the E3 ubiquitin-ligase RMD5/GID2, VID28/GID5, GID8, and the RING-like subunit FYV10/GID9, awaiting a substrate receptor to form the active E3 ligase complex. When cells are shifted to glucose-containing medium, the substrate receptor VID24/GID4 is induced and becomes part of the complex, named GID(SR4). Additionally, GID7 transforms the GID(SR4) E3 ligase core into a higher-order supramolecular assembly (Chelator-GID(SR4)) specifically tailored for FBP1 ubiquitination. Under osmotic or heat stress, the substrate receptor GID10 is induced and becomes part of the complex, named GID(SR10). Within the GID complex, interacts directly with GID8, FYV10/GID9 and VID28/GID5.

The protein resides in the cytoplasm. It carries out the reaction S-ubiquitinyl-[E2 ubiquitin-conjugating enzyme]-L-cysteine + [acceptor protein]-L-lysine = [E2 ubiquitin-conjugating enzyme]-L-cysteine + N(6)-ubiquitinyl-[acceptor protein]-L-lysine.. It functions in the pathway protein modification; protein ubiquitination. E3 ubiquitin-protein ligase component of the GID E3 ligase complex recruiting N termini and catalyzing ubiquitination of proteins targeted for degradation. GID E3 is regulated through assembly with interchangeable N-degron-binding substrate receptors induced by distinct environmental perturbations. Required for the adaptation to the presence of glucose in the growth medium; mediates in association with the substrate receptor VID24/GID4 the degradation of enzymes involved in gluconeogenesis when cells are shifted to glucose-containing medium. Required for proteasome-dependent catabolite degradation of fructose-1,6-bisphosphatase (FBP1), malate dehydrogenase (MDH2), and other gluconeogenic enzymes. This is E3 ubiquitin-protein ligase RMD5 from Saccharomyces cerevisiae (strain ATCC 204508 / S288c) (Baker's yeast).